Consider the following 313-residue polypeptide: MKIGLVKANFPGERRVPLLPKDIKDFKNEILVEEGFGKFLDIDDQEYSDKGCHILSRAEVFAESEAIFSLKLIQPTDYYHLREGQMIIGWTHPFGSGQSFMKEQALPKKLIVVDLDSNSPCIYYENEIFESGIPKGLLYKNSFYAGYAGVLDALLQYGLIPTEETKIAILGSGNVAQGAFSSISKYSSNIRMYYRKTMSIFKENYTKYDIIINGIEIGKDDDPILSFSEQKSLKKGTLIIDVAADAGNTIEGSHFTSIDAPIYENAGKYYYVVPNTPSLIYRNVSQELSKILSENIFRKDCSRFIEKVKPLNK.

Residues Arg15, Lys71, and His92 each coordinate pyruvate. An NADP(+)-binding site is contributed by 171 to 176 (GSGNVA).

It belongs to the AlaDH/PNT family. CEOS subfamily. In terms of assembly, homotetramer.

The catalysed reaction is N(5)-[1(S)-1-carboxyethyl]-L-ornithine + NADP(+) + H2O = L-ornithine + pyruvate + NADPH + H(+). Its activity is regulated as follows. Is potently inhibited by the reaction product N(5)-(L-1-carboxyethyl)-L-ornithine. Functionally, catalyzes the NADPH-dependent reductive condensation between pyruvic acid and the side chain amino group of L-ornithine to form N(5)-(L-1-carboxyethyl)-L-ornithine. To a lesser extent, can also use L-lysine as substrate (yielding N(6)-(L-1-carboxyethyl)-L-lysine). NADH cannot replace NADPH in the condensation reaction. The polypeptide is N(5)-(carboxyethyl)ornithine synthase (ceo) (Lactococcus lactis subsp. lactis (Streptococcus lactis)).